A 319-amino-acid polypeptide reads, in one-letter code: GATA transcription factor 18 (319 aa).

Residues 1-15 show a composition bias toward low complexity; that stretch reads MPDAAAAAAAAQDAD. Positions 1–74 are disordered; it reads MPDAAAAAAA…AAPEPVSALL (74 aa). Positions 31–60 are enriched in acidic residues; the sequence is DNDDDDGDDGTEEDEEEDDDEEGDEEELPP. The Tify domain occupies 74–109; it reads LPGSPNQLTLLFQGEVYVFESVTPEKVQAVLLLLGR. The region spanning 143-185 is the CCT domain; that stretch reads RVASLIRFREKRKERNFDKKIRYAVRKEVALRMQRRKGQFAGR. Residues 215 to 242 form a GATA-type zinc finger; it reads CQNCGTSEKMTPAMRRGPAGPRTLCNAC. The segment at 292 to 319 is disordered; that stretch reads ITASHGEVMGDSTPANEAEIGAPKAQSQ.

Belongs to the type IV zinc-finger family. Class C subfamily.

Its subcellular location is the nucleus. Its function is as follows. Transcriptional activator that specifically binds 5'-GATA-3' or 5'-GAT-3' motifs within gene promoters. This chain is GATA transcription factor 18, found in Oryza sativa subsp. japonica (Rice).